We begin with the raw amino-acid sequence, 410 residues long: Angiopoietin-related protein 4 (410 aa).

An N-terminal signal peptide occupies residues Met1–Ala23. Residues Ala79–Gln101 form a disordered region. Over residues Lys84–Pro98 the composition is skewed to basic and acidic residues. The stretch at Glu104–Ala152 forms a coiled coil. Asn181 carries an N-linked (GlcNAc...) asparagine glycan. Residues Thr183–Glu405 enclose the Fibrinogen C-terminal domain. An intrachain disulfide couples Cys192 to Cys220. Residues Asn236 and Asn242 are each glycosylated (N-linked (GlcNAc...) asparagine). Cys345 and Cys358 are joined by a disulfide.

As to quaternary structure, homooligomer; disulfide-linked via Cys residues in the N-terminal part of the protein. The homooligomer undergoes proteolytic processing to release the ANGPTL4 C-terminal chain, which circulates as a monomer. The homooligomer unprocessed form is able to interact with the extracellular matrix. In terms of processing, N-glycosylated. Post-translationally, forms disulfide-linked dimers and tetramers. Cleaved into a smaller N-terminal chain and a larger chain that contains the fibrinogen C-terminal domain; both cleaved and uncleaved forms are detected in the extracellular space. The cleaved form is not present within the cell. Detected in liver and kidney. Predominantly expressed in adipose tissue and is strongly up-regulated by fasting in white adipose tissue and liver. More abundant in areas of lower flow stress in the inner curvature compared to the outer curvature regions of the aorta (at protein level).

Its subcellular location is the secreted. It localises to the extracellular space. The protein resides in the extracellular matrix. Its function is as follows. Mediates inactivation of the lipoprotein lipase LPL, and thereby plays a role in the regulation of triglyceride clearance from the blood serum and in lipid metabolism. May also play a role in regulating glucose homeostasis and insulin sensitivity. Inhibits proliferation, migration, and tubule formation of endothelial cells and reduces vascular leakage. Upon heterologous expression, inhibits the adhesion of endothelial cell to the extracellular matrix (ECM), and inhibits the reorganization of the actin cytoskeleton, formation of actin stress fibers and focal adhesions in endothelial cells that have adhered to ANGPTL4-containing ECM (in vitro). Depending on context, may modulate tumor-related angiogenesis. In terms of biological role, mediates inactivation of the lipoprotein lipase LPL, and thereby plays an important role in the regulation of triglyceride clearance from the blood serum and in lipid metabolism. Has higher activity in LPL inactivation than the uncleaved protein. This chain is Angiopoietin-related protein 4 (Angptl4), found in Mus musculus (Mouse).